The sequence spans 20 residues: Short cationic peptide-4a (20 aa).

The residue at position 20 (Glu20) is a Glutamic acid 1-amide.

Expressed by the venom gland.

It is found in the secreted. The polypeptide is Short cationic peptide-4a (Cupiennius salei (American wandering spider)).